We begin with the raw amino-acid sequence, 170 residues long: Protein SOB FIVE-LIKE 5 (170 aa).

Residues 10-15 carry the SOFL-A motif; it reads SGWTLY. Positions 17–78 are disordered; sequence DQSVSSPSPS…GPRNISEEDS (62 aa). The segment covering 35-44 has biased composition (basic and acidic residues); the sequence is DSRRRSKDSW. Positions 61-70 match the SOFL-B motif; sequence SMISDASSGP. The short motif at 79–86 is the Nuclear localization signal element; it reads VKKINIVG.

This sequence belongs to the SOFL plant protein family. As to expression, expressed in seedlings, roots, flowers and siliques. Barely detectable in leaves.

The protein resides in the cytoplasm. The protein localises to the nucleus. Functionally, involved in cytokinin-mediated development. This chain is Protein SOB FIVE-LIKE 5, found in Arabidopsis thaliana (Mouse-ear cress).